A 191-amino-acid polypeptide reads, in one-letter code: Ion-translocating oxidoreductase complex subunit B (191 aa).

The hydrophobic stretch occupies residues 1 to 26 (MSAIWIAIAVLSALSLVFGGLLGYAS). The 60-residue stretch at 32–91 (EEDPIVEQIDAILPQSQCGQCGYPGCRPYADAVGNNGEMINKCAPGGEQTMLKLAALLNV) folds into the 4Fe-4S domain. Residues Cys-49, Cys-52, Cys-57, Cys-74, Cys-116, Cys-119, Cys-122, Cys-126, Cys-146, Cys-149, Cys-152, and Cys-156 each coordinate [4Fe-4S] cluster. 4Fe-4S ferredoxin-type domains lie at 107 to 136 (KVAW…GATR) and 137 to 166 (AMHT…MRPV).

The protein belongs to the 4Fe4S bacterial-type ferredoxin family. RnfB subfamily. The complex is composed of six subunits: RnfA, RnfB, RnfC, RnfD, RnfE and RnfG. Requires [4Fe-4S] cluster as cofactor.

The protein localises to the cell inner membrane. In terms of biological role, part of a membrane-bound complex that couples electron transfer with translocation of ions across the membrane. The sequence is that of Ion-translocating oxidoreductase complex subunit B from Erwinia tasmaniensis (strain DSM 17950 / CFBP 7177 / CIP 109463 / NCPPB 4357 / Et1/99).